Here is a 152-residue protein sequence, read N- to C-terminus: Em-like protein GEA1 (152 aa).

Composition is skewed to basic and acidic residues over residues 1–17 (MASKQLSREELDEKAKQ) and 32–63 (EAQEHLAEGRSKGGQTRKEQLGHEGYQEIGHK). A disordered region spans residues 1–63 (MASKQLSREE…HEGYQEIGHK (63 aa)). A run of 4 repeats spans residues 44 to 63 (GGQTRKEQLGHEGYQEIGHK), 64 to 83 (GGEARKEQLGHEGYQEMGHK), 84 to 103 (GGEARKEQLGHEGYQEMGHK), and 104 to 123 (GGEARKEQLGHEGYKEMGRK). A 4 X 20 AA tandem repeats region spans residues 44 to 123 (GGQTRKEQLG…HEGYKEMGRK (80 aa)). Residues 116-152 (GYKEMGRKGGLSTMEKSGGERAEEEGIEIDESKFTNK) are disordered.

It belongs to the small hydrophilic plant seed protein family. In seeds only. Specifically located to vascular bundles in the cotyledon and axis of the dry seed. Also found in the epiderm and outer layers of the cortex in the embryo axis.

In terms of biological role, it is thought to provide protection for the cytoplasm during the desiccation stage of embryo development. The sequence is that of Em-like protein GEA1 (EM1) from Arabidopsis thaliana (Mouse-ear cress).